Reading from the N-terminus, the 394-residue chain is Elongation factor Tu (394 aa).

Residues 10-204 (KPHVNVGTIG…HLDSYIPEPE (195 aa)) form the tr-type G domain. The interval 19–26 (GHVDHGKT) is G1. Position 19–26 (19–26 (GHVDHGKT)) interacts with GTP. Thr26 provides a ligand contact to Mg(2+). Residues 60 to 64 (GITIN) form a G2 region. The interval 81 to 84 (DCPG) is G3. Residues 81–85 (DCPGH) and 136–139 (NKCD) contribute to the GTP site. The segment at 136–139 (NKCD) is G4. The segment at 174–176 (SAL) is G5.

This sequence belongs to the TRAFAC class translation factor GTPase superfamily. Classic translation factor GTPase family. EF-Tu/EF-1A subfamily. As to quaternary structure, monomer.

The protein localises to the cytoplasm. The enzyme catalyses GTP + H2O = GDP + phosphate + H(+). In terms of biological role, GTP hydrolase that promotes the GTP-dependent binding of aminoacyl-tRNA to the A-site of ribosomes during protein biosynthesis. This chain is Elongation factor Tu, found in Cronobacter sakazakii (strain ATCC BAA-894) (Enterobacter sakazakii).